Reading from the N-terminus, the 265-residue chain is U6 snRNA phosphodiesterase 1 (265 aa).

Residues 1-22 (MSLVCYESSSSGEDDDETISDN) are disordered. Catalysis depends on histidine 109, which acts as the Proton acceptor. AMP-binding positions include 109-111 (HLS) and 195-201 (DFLLHIS). 197-201 (LLHIS) contacts UMP. Histidine 199 (proton donor) is an active-site residue.

Belongs to the 2H phosphoesterase superfamily. USB1 family.

Its subcellular location is the nucleus. The catalysed reaction is a 3'-end uridylyl-uridine-RNA = a 3'-end 2',3'-cyclophospho-uridine-RNA + uridine. 3'-5' RNA exonuclease that trims the 3' end of oligo(U) tracts of the pre-U6 small nuclear RNA (snRNA) molecule, leading to the formation of a U6 snRNA 3' end-terminated with a 2',3'-cyclic phosphate.d. Participates in the U6 snRNA 3' end processing that prevents U6 snRNA degradation. This Schizosaccharomyces pombe (strain 972 / ATCC 24843) (Fission yeast) protein is U6 snRNA phosphodiesterase 1.